The following is a 351-amino-acid chain: UPF0421 protein BC_2748 (351 aa).

The next 4 helical transmembrane spans lie at 19-39 (IAVFLTVLVCDFFNIPTIFAV), 74-94 (FTFFLGHQAISYALAAMFTIV), 109-129 (TLTAVAMIPITANHYFTAFLI), and 131-151 (LATTSTGIIVSTLVNFFIFPP).

The protein belongs to the UPF0421 family.

The protein resides in the cell membrane. The polypeptide is UPF0421 protein BC_2748 (Bacillus cereus (strain ATCC 14579 / DSM 31 / CCUG 7414 / JCM 2152 / NBRC 15305 / NCIMB 9373 / NCTC 2599 / NRRL B-3711)).